Consider the following 297-residue polypeptide: 4-diphosphocytidyl-2-C-methyl-D-erythritol kinase (297 aa).

The active site involves Lys19. 105 to 115 provides a ligand contact to ATP; that stretch reads PIASGIGGGSA. The active site involves Asp147.

This sequence belongs to the GHMP kinase family. IspE subfamily.

The catalysed reaction is 4-CDP-2-C-methyl-D-erythritol + ATP = 4-CDP-2-C-methyl-D-erythritol 2-phosphate + ADP + H(+). The protein operates within isoprenoid biosynthesis; isopentenyl diphosphate biosynthesis via DXP pathway; isopentenyl diphosphate from 1-deoxy-D-xylulose 5-phosphate: step 3/6. In terms of biological role, catalyzes the phosphorylation of the position 2 hydroxy group of 4-diphosphocytidyl-2C-methyl-D-erythritol. In Rhizobium etli (strain CIAT 652), this protein is 4-diphosphocytidyl-2-C-methyl-D-erythritol kinase.